The chain runs to 434 residues: Homogentisate 1,2-dioxygenase (434 aa).

Histidine 289 acts as the Proton acceptor in catalysis. Fe cation-binding residues include histidine 332 and glutamate 338. 2 residues coordinate homogentisate: tyrosine 347 and histidine 368. Histidine 368 is a Fe cation binding site.

This sequence belongs to the homogentisate dioxygenase family. In terms of assembly, hexamer; dimer of trimers. The cofactor is Fe cation.

The catalysed reaction is homogentisate + O2 = 4-maleylacetoacetate + H(+). Its pathway is amino-acid degradation; L-phenylalanine degradation; acetoacetate and fumarate from L-phenylalanine: step 4/6. Involved in the catabolism of homogentisate (2,5-dihydroxyphenylacetate or 2,5-OH-PhAc), a central intermediate in the degradation of phenylalanine and tyrosine. Catalyzes the oxidative ring cleavage of the aromatic ring of homogentisate to yield maleylacetoacetate. This chain is Homogentisate 1,2-dioxygenase, found in Pseudomonas syringae pv. tomato (strain ATCC BAA-871 / DC3000).